A 1058-amino-acid chain; its full sequence is Ubiquitin-like modifier-activating enzyme 1 (1058 aa).

Residues 1–46 (MSSSPLSKKRRVSGPDPKPGSNCSSAQSVLSEVSSVPTNGMAKNGS) form a disordered region. The residue at position 2 (Ser-2) is an N-acetylserine. Phosphoserine occurs at positions 4, 13, 21, 24, and 46. Residues 24–36 (SSAQSVLSEVSSV) are compositionally biased toward low complexity. Tyr-55 bears the Phosphotyrosine mark. Tandem repeats lie at residues 63–199 (GHEA…GQLF) and 459–611 (GSDL…QVVI). A 2 approximate repeats region spans residues 63–611 (GHEAMKMLQT…GTKGNVQVVI (549 aa)). ATP-binding positions include Ala-478, Asp-504, Arg-515, Lys-528, and 576–577 (DN). N6-succinyllysine is present on Lys-528. Cys-632 functions as the Glycyl thioester intermediate in the catalytic mechanism. Residue Lys-671 is modified to N6-acetyllysine. Thr-800 carries the post-translational modification Phosphothreonine. Ser-810, Ser-816, Ser-820, and Ser-835 each carry phosphoserine. Lys-980 carries the post-translational modification N6-acetyllysine.

The protein belongs to the ubiquitin-activating E1 family. In terms of assembly, monomer. Interacts with GAN (via BTB domain). ISGylated.

It localises to the cytoplasm. It is found in the mitochondrion. Its subcellular location is the nucleus. The catalysed reaction is ATP + ubiquitin + [E1 ubiquitin-activating enzyme]-L-cysteine = AMP + diphosphate + S-ubiquitinyl-[E1 ubiquitin-activating enzyme]-L-cysteine.. Its pathway is protein modification; protein ubiquitination. Its function is as follows. Catalyzes the first step in ubiquitin conjugation to mark cellular proteins for degradation through the ubiquitin-proteasome system. Activates ubiquitin by first adenylating its C-terminal glycine residue with ATP, and thereafter linking this residue to the side chain of a cysteine residue in E1, yielding a ubiquitin-E1 thioester and free AMP. Essential for the formation of radiation-induced foci, timely DNA repair and for response to replication stress. Promotes the recruitment of TP53BP1 and BRCA1 at DNA damage sites. The protein is Ubiquitin-like modifier-activating enzyme 1 of Rattus norvegicus (Rat).